Consider the following 110-residue polypeptide: Insulin (110 aa).

A signal peptide spans 1–24; that stretch reads MALWMRLLPLLAFLILWEPSPAHA. Disulfide bonds link Cys31/Cys96, Cys43/Cys109, and Cys95/Cys100. The propeptide at 57 to 87 is c peptide; the sequence is GVDDPQMPQLELGGSPGAGDLRALALEVARQ.

Belongs to the insulin family. As to quaternary structure, heterodimer of a B chain and an A chain linked by two disulfide bonds.

The protein localises to the secreted. Functionally, insulin decreases blood glucose concentration. It increases cell permeability to monosaccharides, amino acids and fatty acids. It accelerates glycolysis, the pentose phosphate cycle, and glycogen synthesis in liver. This is Insulin (INS) from Psammomys obesus (Fat sand rat).